Consider the following 353-residue polypeptide: Ferredoxin--NADP reductase (353 aa).

FAD contacts are provided by Thr-25, Glu-44, Gln-52, Tyr-57, Val-97, Phe-132, Asp-298, and Ser-339.

It belongs to the ferredoxin--NADP reductase type 2 family. In terms of assembly, homodimer. The cofactor is FAD.

The enzyme catalyses 2 reduced [2Fe-2S]-[ferredoxin] + NADP(+) + H(+) = 2 oxidized [2Fe-2S]-[ferredoxin] + NADPH. This Chlorobium chlorochromatii (strain CaD3) protein is Ferredoxin--NADP reductase.